The chain runs to 692 residues: DNA repair protein RAD34 (692 aa).

The segment at 1 to 38 (MAKRLLESSQNDQANRKNSKIEKKEVSFYEEEETDDSF) is disordered. The segment covering 28-38 (FYEEEETDDSF) has biased composition (acidic residues).

Belongs to the XPC family.

It is found in the nucleus. In terms of biological role, involved in nucleotide excision repair (NER) of damaged ribosomal DNA (rDNA). Required for the repair of the RNA polymerase I-transcribed strand of rDNA. The sequence is that of DNA repair protein RAD34 (RAD34) from Saccharomyces cerevisiae (strain ATCC 204508 / S288c) (Baker's yeast).